The chain runs to 526 residues: MRNLIFEEPEGIPGNSSSSLRYAWQSIRAPVIIPLLKLAVIVCSVMSIMLFVERVAMAAVILIVKVLRKKRYTKYNLEAMKQKLERSKKYPMVLIQIPMYNEKEVYKLSIGAVCGLSWPADRFIVQVLDDSTNPVLRELVEMECQKWIQKGVNVKYENRRNRNGYKAGALKEGLEKQYVEDCEFVAIFDADFQPDADFLWNTIPYLLENPKLGLVQARWKFVNSEECMMTRLQEMSLDYHFSVEQEVGSSTYSFFGFNGTAGVWRIQAIKDAGGWKDRTTVEDMDLAVRASLHGWEFVFVGDVKVKNELPSTFKAYRFQQHRWSCGPANLFKKMTKEIICCKRVPLLKRLHLIYAFFFVRKIVAHWVTFFFYCIVIPACVIVPEVNLKKQIAIYIPATITILNAVSTPRSMHLLVLWILFENVMSLHRTKAAIIGLLEANRVNEWVVTEKLGNAMKQRNNARPSRASRFRIIERIHPLEIIVGMYMLHCATYDLLFGHDHFFVYLLLQAGAFFTMGFGLVGTIVPT.

A helical transmembrane segment spans residues 31-51; the sequence is VIIPLLKLAVIVCSVMSIMLF. Aspartate 130 is an active-site residue. Substrate is bound by residues aspartate 189 and aspartate 191. Residue aspartate 283 is part of the active site. The next 4 helical transmembrane spans lie at 362 to 382, 399 to 419, 477 to 497, and 501 to 521; these read IVAH…CVIV, ITIL…LWIL, PLEI…LLFG, and FFVY…GLVG.

It belongs to the glycosyltransferase 2 family. Plant cellulose synthase-like A subfamily.

The protein localises to the golgi apparatus membrane. It catalyses the reaction GDP-mannose + (glucomannan)n = GDP + (glucomannan)n+1.. Functionally, possesses 4-beta-mannosyltransferase activity on mannan using GDP-mannose. The beta-1,4-mannan product is the backbone for galactomannan synthesis by galactomannan galactosyltransferase. The galactomannan is a hemicellulosic storage polysaccharide accumulated in the form of secondary wall thickenings in the seed endosperm. The protein is Glucomannan 4-beta-mannosyltransferase 1 of Cyamopsis tetragonoloba (Guar).